The following is a 309-amino-acid chain: Protease HtpX homolog (309 aa).

2 helical membrane passes run 7-27 (TTVL…MLGG) and 29-49 (QGMM…YWYS). His131 contributes to the Zn(2+) binding site. Glu132 is a catalytic residue. His135 is a binding site for Zn(2+). 2 consecutive transmembrane segments (helical) span residues 141–161 (ILIG…ASMA) and 182–202 (IGLI…QMAI). Glu207 is a Zn(2+) binding site. Positions 278–309 (RHGSDSGTGNRDSSIRRRNMNTEAKAAWDRLR) are disordered.

It belongs to the peptidase M48B family. It depends on Zn(2+) as a cofactor.

The protein localises to the cell inner membrane. The chain is Protease HtpX homolog from Desulforapulum autotrophicum (strain ATCC 43914 / DSM 3382 / VKM B-1955 / HRM2) (Desulfobacterium autotrophicum).